We begin with the raw amino-acid sequence, 221 residues long: Phosphoenolpyruvate guanylyltransferase (221 aa).

Residues Thr154, Gly169, and Ser172 each contribute to the phosphoenolpyruvate site.

The protein belongs to the CofC family.

It catalyses the reaction phosphoenolpyruvate + GTP + H(+) = enolpyruvoyl-2-diphospho-5'-guanosine + diphosphate. It participates in cofactor biosynthesis; coenzyme F420 biosynthesis. Functionally, guanylyltransferase that catalyzes the activation of phosphoenolpyruvate (PEP) as enolpyruvoyl-2-diphospho-5'-guanosine, via the condensation of PEP with GTP. It is involved in the biosynthesis of coenzyme F420, a hydride carrier cofactor. In Mycolicibacterium smegmatis (strain ATCC 700084 / mc(2)155) (Mycobacterium smegmatis), this protein is Phosphoenolpyruvate guanylyltransferase.